Consider the following 262-residue polypeptide: Inactive snake venom serine proteinase 13 (262 aa).

The N-terminal stretch at 1–18 is a signal peptide; it reads MGLIRVLANLLILQLSYA. A propeptide spanning residues 19–24 is cleaved from the precursor; sequence QKSSEL. Residues 25–250 enclose the Peptidase S1 domain; it reads VIGGDECNIN…HLDWIQSIIA (226 aa). Disulfide bonds link Cys-31–Cys-162, Cys-49–Cys-65, Cys-97–Cys-257, Cys-141–Cys-211, Cys-173–Cys-190, and Cys-201–Cys-226. N-linked (GlcNAc...) asparagine glycans are attached at residues Asn-78, Asn-102, and Asn-153.

The protein belongs to the peptidase S1 family. Snake venom subfamily. Monomer. In terms of tissue distribution, expressed by the venom gland.

It is found in the secreted. The protein is Inactive snake venom serine proteinase 13 of Crotalus adamanteus (Eastern diamondback rattlesnake).